The primary structure comprises 501 residues: MDENNGLLLLELNPPNPWDLQPRSPEELAFGEVQITYLTHACMDLKLGDKRMVFDPWLIGPAFARGWWLLHEPPSDWLERLCQADLIYISHLHSDHLSYPTLKKLAGRRPDIPIYVGNTERPVFWNLNQSGVQLTNINVVPFGIWQQVDKNLRFMILMDGVHPEMDTCIIVEYKGHKILNIVDCTRPNGGRLPMKVALMMSDFAGGASGFPMTFSGGKFTEEWKAQFIKTERKKLLNYKARLVKNLQPRIYCPFAGYFVESHPSDKYIKETNTKNDPNELNNLIKKNSDVITWTPRPGATLDLGRMLKDRTDSKGIIEPPEGTKIYKDSWDFEPYLEILNAALGDEIFLHSSWIKEYFTWAGFKDYNLVVRMIETDEDFNPFPGGYDYLVDFLDLSFPKERPQREHPYEEIHSRVDVIRHVVKNGLLWDELYIGFQTRLQRDPDIYHHLFWNHFQIKLPLTPPNWKSFLMCCEQNGPVILQFSTERTNEPNRNKFSVENKA.

The protein belongs to the CMP-Neu5Ac hydroxylase family. Widely expressed. Highly expressed in thymus. Not expressed in brain. May be expressed in adult stem cells (at protein level).

The protein resides in the cytoplasm. Its function is as follows. Sialic acids are components of carbohydrate chains of glycoconjugates and are involved in cell-cell recognition and cell-pathogen interactions. That protein has no CMP-N-acetylneuraminate monooxygenase activity and is not able to convert CMP-N-acetylneuraminic acid (CMP-Neu5Ac) into its hydroxylated derivative CMP-N-glycolylneuraminic acid (CMP-Neu5Gc), a sialic acid abundantly expressed at the surface of many cells in vertebrates. However, it may play a role in Wnt signaling. This chain is Inactive cytidine monophosphate-N-acetylneuraminic acid hydroxylase (CMAHP), found in Homo sapiens (Human).